Here is a 166-residue protein sequence, read N- to C-terminus: MGEEISAIDLVMANDQLVSTSDASDIPYDPYSQFWGKVLVLTFGIICVVFVIFMLHHERIKACRTIISAREQQRTQHSIHRRERSSSGASQQFEHHVRQTDCLPLYEPITALNQQYLKTLPTTSTPPPPAIFDENGEFVGDVPSVAGAIERPPSYESLPAPQNDEV.

The helical transmembrane segment at 34 to 54 (FWGKVLVLTFGIICVVFVIFM) threads the bilayer. Disordered regions lie at residues 73-93 (QRTQ…SQQF) and 123-166 (TSTP…NDEV).

It localises to the vacuole membrane. This is an uncharacterized protein from Schizosaccharomyces pombe (strain 972 / ATCC 24843) (Fission yeast).